A 123-amino-acid chain; its full sequence is Small ribosomal subunit protein uS12c (123 aa).

This sequence belongs to the universal ribosomal protein uS12 family. In terms of assembly, part of the 30S ribosomal subunit.

Its subcellular location is the plastid. The protein localises to the chloroplast. Its function is as follows. With S4 and S5 plays an important role in translational accuracy. Located at the interface of the 30S and 50S subunits. This Huperzia lucidula (Shining clubmoss) protein is Small ribosomal subunit protein uS12c (rps12).